We begin with the raw amino-acid sequence, 213 residues long: Transmembrane emp24 domain-containing protein p24delta8 (213 aa).

The N-terminal stretch at 1-22 (MDLCRSSILLLIIALLSPRTLS) is a signal peptide. Topologically, residues 23–180 (MRYELKSSKT…QELNRSTNSK (158 aa)) are lumenal. Positions 32–148 (TKCIGEEIHE…VDMMEYQVKT (117 aa)) constitute a GOLD domain. The N-linked (GlcNAc...) asparagine glycan is linked to Asn-97. Residues 163 to 176 (LREREEEMQELNRS) are a coiled coil. Arg-166 is subject to Omega-N-methylated arginine. N-linked (GlcNAc...) asparagine glycosylation occurs at Asn-174. Residues 181-203 (MAWLSFGSLVVCLSVAGLQFWHL) form a helical membrane-spanning segment. The tract at residues 202–213 (HLKTFFEKKKLI) is interaction with ARF1. Residues 204-213 (KTFFEKKKLI) lie on the Cytoplasmic side of the membrane. Positions 206–207 (FF) match the COPII vesicle coat-binding motif. The COPI vesicle coat-binding signature appears at 206-213 (FFEKKKLI).

The protein belongs to the EMP24/GP25L family. In terms of assembly, probably oligomerizes with other members of the EMP24/GP25L family. Associates with the COPI vesicle coat (coatomer). Associates with the COPII vesicle coat (coatomer). Interacts with ARF1 (GDP-bound).

The protein localises to the endoplasmic reticulum membrane. The protein resides in the golgi apparatus. It localises to the cis-Golgi network membrane. It is found in the golgi stack membrane. Its function is as follows. Involved in vesicular protein trafficking. Mainly functions in the early secretory pathway. Thought to act as cargo receptor at the lumenal side for incorporation of secretory cargo molecules into transport vesicles and to be involved in vesicle coat formation at the cytoplasmic side. On Golgi membranes, acts as a primary receptor for ARF1-GDP which is involved in COPI-vesicle formation. This is Transmembrane emp24 domain-containing protein p24delta8 from Arabidopsis thaliana (Mouse-ear cress).